Consider the following 122-residue polypeptide: Basic phospholipase A2 (122 aa).

7 cysteine pairs are disulfide-bonded: C26–C115, C28–C44, C43–C95, C49–C122, C50–C88, C57–C81, and C75–C86. Y27, G29, and G31 together coordinate Ca(2+). H47 is an active-site residue. D48 provides a ligand contact to Ca(2+). D89 is a catalytic residue.

It belongs to the phospholipase A2 family. Group II subfamily. D49 sub-subfamily. It depends on Ca(2+) as a cofactor. As to expression, expressed by the venom gland.

The protein resides in the secreted. It catalyses the reaction a 1,2-diacyl-sn-glycero-3-phosphocholine + H2O = a 1-acyl-sn-glycero-3-phosphocholine + a fatty acid + H(+). Its function is as follows. Snake venom phospholipase A2 (PLA2) that does not inhibit platelet aggregation. Exhibits cytotoxic and anticoagulant activity. Induces Ehrlich tumor growth but not angiogenesis. PLA2 catalyzes the calcium-dependent hydrolysis of the 2-acyl groups in 3-sn-phosphoglycerides. This chain is Basic phospholipase A2, found in Bothrops leucurus (Whitetail lancehead).